Here is a 419-residue protein sequence, read N- to C-terminus: Serine hydroxymethyltransferase 1 (419 aa).

Residues Leu-121 and 125–127 contribute to the (6S)-5,6,7,8-tetrahydrofolate site; that span reads GHL. Lys-230 is subject to N6-(pyridoxal phosphate)lysine. 356–358 lines the (6S)-5,6,7,8-tetrahydrofolate pocket; the sequence is SPF.

It belongs to the SHMT family. Homodimer. Pyridoxal 5'-phosphate serves as cofactor.

The protein localises to the cytoplasm. It catalyses the reaction (6R)-5,10-methylene-5,6,7,8-tetrahydrofolate + glycine + H2O = (6S)-5,6,7,8-tetrahydrofolate + L-serine. It participates in one-carbon metabolism; tetrahydrofolate interconversion. Its pathway is amino-acid biosynthesis; glycine biosynthesis; glycine from L-serine: step 1/1. Its function is as follows. Catalyzes the reversible interconversion of serine and glycine with tetrahydrofolate (THF) serving as the one-carbon carrier. This reaction serves as the major source of one-carbon groups required for the biosynthesis of purines, thymidylate, methionine, and other important biomolecules. Also exhibits THF-independent aldolase activity toward beta-hydroxyamino acids, producing glycine and aldehydes, via a retro-aldol mechanism. The chain is Serine hydroxymethyltransferase 1 from Colwellia psychrerythraea (strain 34H / ATCC BAA-681) (Vibrio psychroerythus).